Here is a 546-residue protein sequence, read N- to C-terminus: ATP synthase subunit alpha (546 aa).

173–180 (GDRQTGKT) lines the ATP pocket. Residues 520–546 (VDKKTAPKSVTPVDQEQIKAGKAQEKK) are disordered. A compositionally biased stretch (basic and acidic residues) spans 535-546 (EQIKAGKAQEKK).

It belongs to the ATPase alpha/beta chains family. In terms of assembly, F-type ATPases have 2 components, CF(1) - the catalytic core - and CF(0) - the membrane proton channel. CF(1) has five subunits: alpha(3), beta(3), gamma(1), delta(1), epsilon(1). CF(0) has three main subunits: a(1), b(2) and c(9-12). The alpha and beta chains form an alternating ring which encloses part of the gamma chain. CF(1) is attached to CF(0) by a central stalk formed by the gamma and epsilon chains, while a peripheral stalk is formed by the delta and b chains.

It localises to the cell membrane. The catalysed reaction is ATP + H2O + 4 H(+)(in) = ADP + phosphate + 5 H(+)(out). Produces ATP from ADP in the presence of a proton gradient across the membrane. The alpha chain is a regulatory subunit. The sequence is that of ATP synthase subunit alpha from Bifidobacterium animalis subsp. lactis (strain AD011).